The primary structure comprises 188 residues: Elongation factor P (188 aa).

It belongs to the elongation factor P family.

It localises to the cytoplasm. Its pathway is protein biosynthesis; polypeptide chain elongation. Its function is as follows. Involved in peptide bond synthesis. Stimulates efficient translation and peptide-bond synthesis on native or reconstituted 70S ribosomes in vitro. Probably functions indirectly by altering the affinity of the ribosome for aminoacyl-tRNA, thus increasing their reactivity as acceptors for peptidyl transferase. This is Elongation factor P from Pseudomonas aeruginosa (strain LESB58).